The primary structure comprises 120 residues: Host cell factor C1 regulator 1 (120 aa).

The interval 1–30 (MILQQPLERGPPSRDPRATTGVTRGLNASL) is disordered. The span at 20-30 (TGVTRGLNASL) shows a compositional bias: polar residues. Residues 58 to 61 (DHPY) form an interaction with HCFC1 region. The Nuclear export signal signature appears at 92–101 (IPEALRLLRL).

Interacts with HCFC1.

It is found in the cytoplasm. Its subcellular location is the nucleus. In terms of biological role, regulates HCFC1 activity by modulating its subcellular localization. Overexpression of HCFC1R1 leads to accumulation of HCFC1 in the cytoplasm. HCFC1R1-mediated export may provide the pool of cytoplasmic HCFC1 required for import of virion-derived VP16 into the nucleus. This chain is Host cell factor C1 regulator 1 (Hcfc1r1), found in Mus musculus (Mouse).